The chain runs to 497 residues: Intermediate filament protein A (497 aa).

Residues 1–32 (MSDLNDRLASYIEKVRFLEAQNRKLAADLDLL) are coil 1A. In terms of domain architecture, IF rod spans 1–342 (MSDLNDRLAS…KMLEGEENRA (342 aa)). A linker 1 region spans residues 33 to 46 (RGRWGKDTLSVRAM). A coil 1B region spans residues 47-184 (YEGELQEARK…RVHDQEIAEL (138 aa)). The interval 185–202 (QAMASRDTTPENREYFKN) is linker 12. The coil 2 stretch occupies residues 203-342 (ELASAIRDIR…KMLEGEENRA (140 aa)). The segment at 343–497 (GLRQLVEQVV…THIQRSSHTI (155 aa)) is tail. Residues 375 to 493 (SRTSFQRSAK…EERATHIQRS (119 aa)) enclose the LTD domain.

It belongs to the intermediate filament family. As to quaternary structure, a and B can form homopolymers. As to expression, giant body muscle cells.

It localises to the cytoplasm. This is Intermediate filament protein A from Ascaris suum (Pig roundworm).